Consider the following 427-residue polypeptide: MGNCVARSGTAVDAGGDGGEDGKRRRRRWKAPREDQLGMVPGRIFSNDGRSRTATVYTQQGRKGINQDAMLVWDGFGGEDDGVLCGVFDGHGPHGHVVARRVRDSLPLRLMSAARDSGADMPAAAWRKAFARAYKAMDKDLRSHPSLDCFCSGSTAVTVLKLGSDLYMANIGDSRAVLGSREATGGGMVAVQLTVDLKPDVPSEAERIKKCRGRVFALQDEPEVPRVWLPFDDAPGLAMARAFGDFCLKDYGVISVPEFFHWSLTEKDQFVILASDGVWDVLSNQEAVDIVSASPSRSKAAKSLVEAATREWKTKYPTSKIDDCAVVCLYLDGKMDHERDSTASLDNISIEEGSVADPNEPQEQEPTLTRNFTVRTVAGSTQEKTLAGVDARIAGVANDQNWSGLDGVTRVNSLVQLPRFSEERAIG.

Residues methionine 1 to glutamine 36 form a disordered region. Positions threonine 53–leucine 331 constitute a PPM-type phosphatase domain. Mn(2+) contacts are provided by aspartate 89, glycine 90, aspartate 276, and aspartate 322.

This sequence belongs to the PP2C family. Mg(2+) serves as cofactor. Mn(2+) is required as a cofactor.

The catalysed reaction is O-phospho-L-seryl-[protein] + H2O = L-seryl-[protein] + phosphate. It carries out the reaction O-phospho-L-threonyl-[protein] + H2O = L-threonyl-[protein] + phosphate. The chain is Probable protein phosphatase 2C 64 from Oryza sativa subsp. japonica (Rice).